The chain runs to 201 residues: Recombination protein RecR (201 aa).

A C4-type zinc finger spans residues 60–75 (CSCCGNVDTSDPCTIC). Residues 83–178 (ATLIVVEDVS…RVTRLAHGVP (96 aa)) enclose the Toprim domain.

It belongs to the RecR family.

Its function is as follows. May play a role in DNA repair. It seems to be involved in an RecBC-independent recombinational process of DNA repair. It may act with RecF and RecO. This Brucella melitensis biotype 1 (strain ATCC 23456 / CCUG 17765 / NCTC 10094 / 16M) protein is Recombination protein RecR.